A 577-amino-acid polypeptide reads, in one-letter code: Proton channel OTOP3 (577 aa).

The interval 1-46 (MASQTSAPAEPAPMPSPEAKTTEGASSYDQADMETKHAGSPCPPKQ) is disordered. Over 1-69 (MASQTSAPAE…RDRQAQKAGQ (69 aa)) the chain is Cytoplasmic. Residues 70–90 (LFSGLLALNVVFLGGAFICSM) form a helical membrane-spanning segment. The Extracellular portion of the chain corresponds to 91 to 100 (IFNKVSVTLG). A helical membrane pass occupies residues 101 to 124 (DVWILLAALKVLSLLWLLYYTVGT). At 125–140 (TRKPHAVLYRDPHAGP) the chain is on the cytoplasmic side. A helical membrane pass occupies residues 141–162 (IWVRGSLVLFGSCTVCLNIFRM). Topologically, residues 163 to 174 (GYDVSHIHCKSE) are extracellular. Residues 175–198 (VELIFPAIEIVFMIIQTWVLWRHC) traverse the membrane as a helical segment. The Cytoplasmic segment spans residues 199 to 206 (KDCVQVQT). The chain crosses the membrane as a helical span at residues 207–229 (NFTRCGLMLTLATNLLMWVLAVT). The Extracellular segment spans residues 230 to 276 (NDSMHREIEAELDALMEKFSGNGTNTCMCLNTTVCEVFRKGYLMLYP). A helical membrane pass occupies residues 277–293 (FSTEYCLICCAVLFVMW). At 294 to 319 (KNVSRSLAAHTGAHPNRSPFRLHGTI) the chain is on the cytoplasmic side. Residues 320 to 339 (FGPLLGLLALVAGVCVFVLF) traverse the membrane as a helical segment. The Extracellular segment spans residues 340-353 (QIEASGPDIARQYF). The chain crosses the membrane as a helical span at residues 354 to 376 (TLYYAFYVAVLPTMSLACLAGTA). Over 377 to 394 (IHGLEERELDTLKNPTRS) the chain is Cytoplasmic. A helical membrane pass occupies residues 395–416 (LDVVLLMGAALGQMGIAYFSIV). Topologically, residues 417 to 427 (AIVATQPHELL) are extracellular. Residues 428-450 (NQLILAYSLLLILQHITQNLFII) form a helical membrane-spanning segment. The Cytoplasmic portion of the chain corresponds to 451–510 (EGLHRRPLWEPAVSGVMEKQDVELPRRGSLRELGQDLRRASRAYIHSFSHLNWKRRMLKE). A helical membrane pass occupies residues 511–528 (ISLFLILCNITLWMMPAF). Over 529 to 547 (GIHPEFENGLEKDFYGYRT) the chain is Extracellular. The helical transmembrane segment at 548–570 (WFTIVNFGLPLGVFYRMHSVGGL) threads the bilayer. Residues 571–577 (VEVYLGA) are Cytoplasmic-facing.

This sequence belongs to the otopetrin family. In terms of assembly, homodimer. Expressed in epidermis, small intestine, stomach and retina.

It is found in the cell membrane. The catalysed reaction is H(+)(in) = H(+)(out). Activated by extracellular acidification. Activated by Zn(2+) under non-acidic conditions. Its function is as follows. Proton-selective channel gated by extracellular protons. This Mus musculus (Mouse) protein is Proton channel OTOP3.